The following is a 114-amino-acid chain: MNQYETVFILTPVLSDVQMKEAVEKFKGILTAEGAEIINEENWGLKKLAYPIQKKSTGFYQLIEFKAEPQVIEKLEINFRRDERVIRFLTFKMDKYAAEYAAKRRNVKSTKKED.

The protein belongs to the bacterial ribosomal protein bS6 family.

Binds together with bS18 to 16S ribosomal RNA. In Phocaeicola vulgatus (strain ATCC 8482 / DSM 1447 / JCM 5826 / CCUG 4940 / NBRC 14291 / NCTC 11154) (Bacteroides vulgatus), this protein is Small ribosomal subunit protein bS6.